The sequence spans 359 residues: 3-dehydroquinate synthase (359 aa).

NAD(+) contacts are provided by residues 70–75, 104–108, 128–129, Lys141, and Lys150; these read DAEGGK, GAATD, and TT. The Zn(2+) site is built by Glu183, His246, and His262.

This sequence belongs to the sugar phosphate cyclases superfamily. Dehydroquinate synthase family. It depends on Co(2+) as a cofactor. Zn(2+) is required as a cofactor. NAD(+) serves as cofactor.

The protein localises to the cytoplasm. The catalysed reaction is 7-phospho-2-dehydro-3-deoxy-D-arabino-heptonate = 3-dehydroquinate + phosphate. Its pathway is metabolic intermediate biosynthesis; chorismate biosynthesis; chorismate from D-erythrose 4-phosphate and phosphoenolpyruvate: step 2/7. Functionally, catalyzes the conversion of 3-deoxy-D-arabino-heptulosonate 7-phosphate (DAHP) to dehydroquinate (DHQ). The polypeptide is 3-dehydroquinate synthase (Mycolicibacterium vanbaalenii (strain DSM 7251 / JCM 13017 / BCRC 16820 / KCTC 9966 / NRRL B-24157 / PYR-1) (Mycobacterium vanbaalenii)).